A 1059-amino-acid polypeptide reads, in one-letter code: Isoleucine--tRNA ligase (1059 aa).

A 'HIGH' region motif is present at residues 47–57; the sequence is PYTSGQMHLGT. Residues 606–610 carry the 'KMSKS' region motif; the sequence is KMSKS. ATP is bound at residue lysine 609.

The protein belongs to the class-I aminoacyl-tRNA synthetase family. IleS type 2 subfamily. Monomer. The cofactor is Zn(2+).

It localises to the cytoplasm. The catalysed reaction is tRNA(Ile) + L-isoleucine + ATP = L-isoleucyl-tRNA(Ile) + AMP + diphosphate. In terms of biological role, catalyzes the attachment of isoleucine to tRNA(Ile). As IleRS can inadvertently accommodate and process structurally similar amino acids such as valine, to avoid such errors it has two additional distinct tRNA(Ile)-dependent editing activities. One activity is designated as 'pretransfer' editing and involves the hydrolysis of activated Val-AMP. The other activity is designated 'posttransfer' editing and involves deacylation of mischarged Val-tRNA(Ile). This chain is Isoleucine--tRNA ligase, found in Haloquadratum walsbyi (strain DSM 16790 / HBSQ001).